A 906-amino-acid polypeptide reads, in one-letter code: Protein translocase subunit SecA (906 aa).

ATP contacts are provided by residues Q86, 104-108 (GEGKT), and D499. The tract at residues 865-885 (VSRIDPKDRNPEDPTSWGRVS) is disordered. Zn(2+)-binding residues include C890, C892, C901, and H902.

Belongs to the SecA family. In terms of assembly, monomer and homodimer. Part of the essential Sec protein translocation apparatus which comprises SecA, SecYEG and auxiliary proteins SecDF-YajC and YidC. It depends on Zn(2+) as a cofactor.

It is found in the cell inner membrane. The protein localises to the cytoplasm. The catalysed reaction is ATP + H2O + cellular proteinSide 1 = ADP + phosphate + cellular proteinSide 2.. Part of the Sec protein translocase complex. Interacts with the SecYEG preprotein conducting channel. Has a central role in coupling the hydrolysis of ATP to the transfer of proteins into and across the cell membrane, serving both as a receptor for the preprotein-SecB complex and as an ATP-driven molecular motor driving the stepwise translocation of polypeptide chains across the membrane. This is Protein translocase subunit SecA from Rickettsia canadensis (strain McKiel).